The sequence spans 199 residues: Ribonuclease P protein subunit p25 (199 aa).

A compositionally biased stretch (basic and acidic residues) spans 1 to 11 (MENFRKVRSEE). 2 disordered regions span residues 1–31 (MENFRKVRSEEAPAGDGDEGGSPNSGPFADL) and 146–199 (PRQL…DRTA). Residue Ser-172 is modified to Phosphoserine. Residues 190 to 199 (PEAENEDRTA) show a composition bias toward acidic residues.

Belongs to the histone-like Alba family. As to quaternary structure, component of nuclear RNase P and RNase MRP ribonucleoproteins. RNase P consists of a catalytic RNA moiety and 10 different protein chains; POP1, POP4, POP5, POP7, RPP14, RPP21, RPP25, RPP30, RPP38 and RPP40. Within the RNase P complex, POP1, POP7 and RPP25 form the 'finger' subcomplex, POP5, RPP14, RPP40 and homodimeric RPP30 form the 'palm' subcomplex, and RPP21, POP4 and RPP38 form the 'wrist' subcomplex. All subunits of the RNase P complex interact with the catalytic RNA. Several subunits of RNase P are also part of the RNase MRP complex. RNase MRP consists of a catalytic RNA moiety and about 8 protein subunits; POP1, POP7, RPP25, RPP30, RPP38, RPP40 and possibly also POP4 and POP5. POP7 forms a heterodimer with RPP25 that binds to the P3 stem loop of the catalytic RNA.

The protein resides in the nucleus. It localises to the nucleolus. Component of ribonuclease P, a ribonucleoprotein complex that generates mature tRNA molecules by cleaving their 5'-ends. Also a component of the MRP ribonuclease complex, which cleaves pre-rRNA sequences. The protein is Ribonuclease P protein subunit p25 (Rpp25) of Mus musculus (Mouse).